The following is a 406-amino-acid chain: Ubiquitin-associated domain-containing protein 1 (406 aa).

In terms of domain architecture, Ubiquitin-like spans 14–98; the sequence is LRLHICSLDG…LLLVKKRAPP (85 aa). Positions 95–122 are disordered; the sequence is RAPPPTPKMAEVSADEKRKQDQKAPDKD. The segment covering 108–122 has biased composition (basic and acidic residues); the sequence is ADEKRKQDQKAPDKD. The 46-residue stretch at 186 to 231 folds into the UBA 1 domain; sequence EDDEDRVDEVALRQLTEMGFPESRAVKALRLNHMSVTQAMEWLIEH. A compositionally biased stretch (low complexity) spans 238–257; it reads DAPLPCENSSEAAGGLATGE. Residues 238–272 are disordered; it reads DAPLPCENSSEAAGGLATGEAETKPTLGAGAEDPK. The region spanning 289-329 is the UBA 2 domain; it reads RPDPRAVIALMEMGFDEKEVIDALRVNNNQQDAACEWLLGD. Residues 354-393 enclose the STI1 domain; the sequence is NPVVQLGLTNPKTLLAFEDMLENPLNSTQWMNDPETGPVM.

Component of the KPC complex.

It is found in the cytoplasm. Its pathway is protein modification; protein ubiquitination. In terms of biological role, non-catalytic component of the KPC complex, a E3 ubiquitin-protein ligase complex that mediates polyubiquitination of target proteins, such as CDKN1B and NFKB1. Within the KPC complex, UBAC1 acts as an adapter that promotes the transfer of target proteins that have been polyubiquitinated by RNF123/KPC1 to the 26S proteasome. The polypeptide is Ubiquitin-associated domain-containing protein 1 (ubac1) (Xenopus tropicalis (Western clawed frog)).